Here is a 778-residue protein sequence, read N- to C-terminus: Endonuclease MutS2 (778 aa).

G328–T335 provides a ligand contact to ATP. The region spanning L702 to K777 is the Smr domain.

The protein belongs to the DNA mismatch repair MutS family. MutS2 subfamily. As to quaternary structure, homodimer. Binds to stalled ribosomes, contacting rRNA.

Its function is as follows. Endonuclease that is involved in the suppression of homologous recombination and thus may have a key role in the control of bacterial genetic diversity. In terms of biological role, acts as a ribosome collision sensor, splitting the ribosome into its 2 subunits. Detects stalled/collided 70S ribosomes which it binds and splits by an ATP-hydrolysis driven conformational change. Acts upstream of the ribosome quality control system (RQC), a ribosome-associated complex that mediates the extraction of incompletely synthesized nascent chains from stalled ribosomes and their subsequent degradation. Probably generates substrates for RQC. In Streptococcus pneumoniae (strain P1031), this protein is Endonuclease MutS2.